The chain runs to 229 residues: Ribonuclease 3 (229 aa).

Positions 4 to 133 constitute an RNase III domain; sequence WEELQESVGF…FIGALYLDNG (130 aa). Residue glutamate 46 participates in Mg(2+) binding. Aspartate 50 is an active-site residue. Aspartate 119 and glutamate 122 together coordinate Mg(2+). Glutamate 122 is an active-site residue. The 70-residue stretch at 159–228 folds into the DRBM domain; it reads DYKTQLQEIV…AQFAINQLTH (70 aa).

It belongs to the ribonuclease III family. In terms of assembly, homodimer. The cofactor is Mg(2+).

The protein localises to the cytoplasm. The catalysed reaction is Endonucleolytic cleavage to 5'-phosphomonoester.. Its function is as follows. Digests double-stranded RNA. Involved in the processing of primary rRNA transcript to yield the immediate precursors to the large and small rRNAs (23S and 16S). Processes some mRNAs, and tRNAs when they are encoded in the rRNA operon. Processes pre-crRNA and tracrRNA of type II CRISPR loci if present in the organism. This Listeria welshimeri serovar 6b (strain ATCC 35897 / DSM 20650 / CCUG 15529 / CIP 8149 / NCTC 11857 / SLCC 5334 / V8) protein is Ribonuclease 3.